Consider the following 341-residue polypeptide: Malate dehydrogenase, mitochondrial (341 aa).

NAD(+) contacts are provided by residues 35-41 and aspartate 61; that span reads GAAGGIG. 2 residues coordinate substrate: arginine 108 and arginine 114. NAD(+)-binding positions include asparagine 121 and 144-146; that span reads ITN. Substrate-binding residues include asparagine 146 and arginine 180. The active-site Proton acceptor is the histidine 204. Methionine 255 serves as a coordination point for NAD(+).

It belongs to the LDH/MDH superfamily. MDH type 1 family. As to quaternary structure, homodimer.

The protein localises to the mitochondrion matrix. It catalyses the reaction (S)-malate + NAD(+) = oxaloacetate + NADH + H(+). Catalyzes the reversible conversion of (S)-malate to oxaloacetate in the citric acid cycle. This chain is Malate dehydrogenase, mitochondrial, found in Caenorhabditis elegans.